Consider the following 332-residue polypeptide: 5-dehydro-2-deoxygluconokinase (332 aa).

Belongs to the carbohydrate kinase PfkB family.

It carries out the reaction 5-dehydro-2-deoxy-D-gluconate + ATP = 6-phospho-5-dehydro-2-deoxy-D-gluconate + ADP + H(+). The protein operates within polyol metabolism; myo-inositol degradation into acetyl-CoA; acetyl-CoA from myo-inositol: step 5/7. In terms of biological role, catalyzes the phosphorylation of 5-dehydro-2-deoxy-D-gluconate (2-deoxy-5-keto-D-gluconate or DKG) to 6-phospho-5-dehydro-2-deoxy-D-gluconate (DKGP). This Bacillus anthracis (strain A0248) protein is 5-dehydro-2-deoxygluconokinase.